Here is a 340-residue protein sequence, read N- to C-terminus: Citramalyl-CoA lyase, mitochondrial (340 aa).

Residues 1 to 22 constitute a mitochondrion transit peptide; sequence MALRLLRRAARGAAAAALLRLK. 3 residues coordinate substrate: tyrosine 50, lysine 57, and lysine 61. N6-acetyllysine is present on residues lysine 57 and lysine 61. N6-acetyllysine; alternate occurs at positions 82 and 92. Residues lysine 82 and lysine 92 each carry the N6-succinyllysine; alternate modification. Arginine 107 lines the substrate pocket. Residues glutamate 171 and aspartate 206 each coordinate Mg(2+). Residue 272–273 participates in substrate binding; the sequence is IH. Lysine 309 is subject to N6-succinyllysine. Aspartate 320 is a catalytic residue.

This sequence belongs to the HpcH/HpaI aldolase family. Citrate lyase beta subunit-like subfamily. In terms of assembly, homotrimer. It depends on Mg(2+) as a cofactor.

The protein resides in the mitochondrion. It catalyses the reaction glyoxylate + acetyl-CoA + H2O = (S)-malate + CoA + H(+). The catalysed reaction is propanoyl-CoA + glyoxylate + H2O = 3-methylmalate + CoA + H(+). The enzyme catalyses (3S)-citramalyl-CoA = pyruvate + acetyl-CoA. It carries out the reaction (S)-malyl-CoA + H2O = (S)-malate + CoA + H(+). Functionally, mitochondrial citramalyl-CoA lyase indirectly involved in the vitamin B12 metabolism. Converts citramalyl-CoA into acetyl-CoA and pyruvate in the C5-dicarboxylate catabolism pathway. The C5-dicarboxylate catabolism pathway is required to detoxify itaconate, a vitamin B12-poisoning metabolite. Also acts as a malate synthase in vitro, converting glyoxylate and acetyl-CoA to malate. Also displays malyl-CoA thioesterase activity. Also acts as a beta-methylmalate synthase in vitro, by mediating conversion of glyoxylate and propionyl-CoA to beta-methylmalate. Also has very weak citramalate synthase activity in vitro. This chain is Citramalyl-CoA lyase, mitochondrial, found in Homo sapiens (Human).